Reading from the N-terminus, the 341-residue chain is Biotin synthase (341 aa).

In terms of domain architecture, Radical SAM core spans 40 to 267; sequence AEIQVSTLLS…RSMVRLSAGR (228 aa). Residues C55, C59, and C62 each coordinate [4Fe-4S] cluster. C99, C130, C190, and R262 together coordinate [2Fe-2S] cluster.

Belongs to the radical SAM superfamily. Biotin synthase family. As to quaternary structure, homodimer. [4Fe-4S] cluster serves as cofactor. It depends on [2Fe-2S] cluster as a cofactor.

It carries out the reaction (4R,5S)-dethiobiotin + (sulfur carrier)-SH + 2 reduced [2Fe-2S]-[ferredoxin] + 2 S-adenosyl-L-methionine = (sulfur carrier)-H + biotin + 2 5'-deoxyadenosine + 2 L-methionine + 2 oxidized [2Fe-2S]-[ferredoxin]. It functions in the pathway cofactor biosynthesis; biotin biosynthesis; biotin from 7,8-diaminononanoate: step 2/2. Catalyzes the conversion of dethiobiotin (DTB) to biotin by the insertion of a sulfur atom into dethiobiotin via a radical-based mechanism. The protein is Biotin synthase of Xylella fastidiosa (strain M12).